The primary structure comprises 462 residues: Retinoic acid receptor alpha (462 aa).

Residues 1-87 (MASNSSSCPT…PPPLPRIYKP (87 aa)) are modulating. Over residues 52–64 (GYSTPSPATIETQ) the composition is skewed to polar residues. The disordered stretch occupies residues 52–77 (GYSTPSPATIETQSSSSEEIVPSPPS). Phosphoserine; by CDK7 is present on Ser-77. 2 NR C4-type zinc fingers span residues 88–108 (CFVC…CEGC) and 124–148 (CHRD…LQKC). Residues 88–153 (CFVCQDKSSG…RLQKCFEVGM (66 aa)) constitute a DNA-binding region (nuclear receptor). Ser-96 is modified (phosphoserine; by PKB/AKT1). Residues 154 to 182 (SKESVRNDRNKKKKEVPKPECSESYTLTP) are hinge. Residues Lys-166 and Lys-171 each participate in a glycyl lysine isopeptide (Lys-Gly) (interchain with G-Cter in SUMO) cross-link. In terms of domain architecture, NR LBD spans 183–417 (EVGELIEKVR…PLIQEMLENS (235 aa)). Residue Ser-219 is modified to Phosphoserine; by PKA. Position 235 (Cys-235) interacts with all-trans-retinoate. The UBR5-degron signature appears at 254-258 (IADQI). Position 287 (Ser-287) interacts with all-trans-retinoate. Position 369 is a phosphoserine; by PKA (Ser-369). Lys-399 participates in a covalent cross-link: Glycyl lysine isopeptide (Lys-Gly) (interchain with G-Cter in SUMO). The segment at 404–419 (GSMPPLIQEMLENSEG) is required for binding corepressor NCOR1. The 9aaTAD motif lies at 408-416 (PLIQEMLEN). Residues 419–462 (GLDTLSGQPGGGGRDGGGLAPPPGSCSPSLSPSSNRSSPATHSP) form a disordered region. Over residues 426-437 (QPGGGGRDGGGL) the composition is skewed to gly residues. The segment covering 444–462 (CSPSLSPSSNRSSPATHSP) has biased composition (low complexity).

Belongs to the nuclear hormone receptor family. NR1 subfamily. As to quaternary structure, heterodimer; with RXRA (via C-terminus); association with RXRA is enhanced by pulsatile shear stress. Binds DNA preferentially as a heterodimer. RXRA serves as enhancer to induce RARA binding to RARE. Interacts with RXRG. Interacts with coactivators NCOA3 and NCOA6. Interacts with NCOA7; the interaction requires ligand-binding. Interacts (via the ligand-binding domain) with PRAME; the interaction is ligand (retinoic acid)-dependent. Interacts with AKT1; the interaction phosphorylates RARA and represses transactivation. Interacts with PRKAR1A; the interaction negatively regulates RARA transcriptional activity. Interacts with NCOR1 and NCOR2. Interacts with PRMT2. Interacts with LRIF1. Interacts with ASXL1 and NCOA1. Interacts with ACTN4. In a complex with HDAC3, HDAC5 and HDAC7; the HDACs serve as corepressors of RARA, causing its deacetylation and inhibition of RARE DNA element binding; association with HDAC3, HDAC5 and HDAC7 is increased upon oscillatory shear stress. Interacts with CDK7. In the absence of hormonal ligand, interacts with TACC1. Post-translationally, phosphorylated on serine and threonine residues. Phosphorylation does not change during cell cycle. Phosphorylation on Ser-77 is crucial for transcriptional activity. Phosphorylation by AKT1 is required for the repressor activity but has no effect on DNA binding, protein stability nor subcellular localization. Phosphorylated by PKA in vitro. This phosphorylation on Ser-219 and Ser-369 is critical for ligand binding, nuclear localization and transcriptional activity in response to FSH signaling. In terms of processing, sumoylated with SUMO2, mainly on Lys-399 which is also required for SENP6 binding. On all-trans retinoic acid (ATRA) binding, a conformational change may occur that allows sumoylation on two additional site, Lys-166 and Lys-171. Probably desumoylated by SENP6. Sumoylation levels determine nuclear localization and regulate ATRA-mediated transcriptional activity. Trimethylation enhances heterodimerization with RXRA and positively modulates the transcriptional activation. Post-translationally, ubiquitinated by UBR5, leading to its degradation: UBR5 specifically recognizes and binds ligand-bound RARA when it is not associated with coactivators (NCOAs). In presence of NCOAs, the UBR5-degron is not accessible, preventing its ubiquitination and degradation. In terms of processing, acetylated; acetylation is increased upon pulsatile shear stress and decreased upon oscillatory shear stress. In terms of tissue distribution, expressed in monocytes.

It is found in the nucleus. It localises to the cytoplasm. Functionally, receptor for retinoic acid. Retinoic acid receptors bind as heterodimers to their target response elements in response to their ligands, all-trans or 9-cis retinoic acid, and regulate gene expression in various biological processes. The RXR/RAR heterodimers bind to the retinoic acid response elements (RARE) composed of tandem 5'-AGGTCA-3' sites known as DR1-DR5. In the absence of ligand, the RXR-RAR heterodimers associate with a multiprotein complex containing transcription corepressors that induce histone deacetylation, chromatin condensation and transcriptional suppression. On ligand binding, the corepressors dissociate from the receptors and associate with the coactivators leading to transcriptional activation. Formation of a complex with histone deacetylases might lead to inhibition of RARE DNA element binding and to transcriptional repression. Transcriptional activation and RARE DNA element binding might be supported by the transcription factor KLF2. RARA plays an essential role in the regulation of retinoic acid-induced germ cell development during spermatogenesis. Has a role in the survival of early spermatocytes at the beginning prophase of meiosis. In Sertoli cells, may promote the survival and development of early meiotic prophase spermatocytes. In concert with RARG, required for skeletal growth, matrix homeostasis and growth plate function. Together with RXRA, positively regulates microRNA-10a expression, thereby inhibiting the GATA6/VCAM1 signaling response to pulsatile shear stress in vascular endothelial cells. In association with HDAC3, HDAC5 and HDAC7 corepressors, plays a role in the repression of microRNA-10a and thereby promotes the inflammatory response. In Homo sapiens (Human), this protein is Retinoic acid receptor alpha (RARA).